Here is a 714-residue protein sequence, read N- to C-terminus: Polyribonucleotide nucleotidyltransferase (714 aa).

Mg(2+)-binding residues include D487 and D493. Positions 554–613 (PRIEVMTIPVDKIREVIGSGGKVIREIVEKTGAKINIEDDGTIKIASASGKEIEAARKWI) constitute a KH domain. One can recognise an S1 motif domain in the interval 623 to 691 (GVVYEGTVVK…ERGKVRLSMK (69 aa)).

It belongs to the polyribonucleotide nucleotidyltransferase family. It depends on Mg(2+) as a cofactor.

It is found in the cytoplasm. It catalyses the reaction RNA(n+1) + phosphate = RNA(n) + a ribonucleoside 5'-diphosphate. Involved in mRNA degradation. Catalyzes the phosphorolysis of single-stranded polyribonucleotides processively in the 3'- to 5'-direction. This chain is Polyribonucleotide nucleotidyltransferase, found in Allorhizobium ampelinum (strain ATCC BAA-846 / DSM 112012 / S4) (Agrobacterium vitis (strain S4)).